A 185-amino-acid chain; its full sequence is MLNEIKAKTKERMLKTIQSFHDDMKGVRTGRANASLLDGIVVNIYGGHQKLNQVAGVSAIDNKTLSVKVWDATAIGEVKNAIINANLNLNPVVEGNTIRIVLPDLTQETREKLVKLLHQFSENARVAIRNIRRDVMEEIEEMKKNKEISEDDFHVAKKEIQNITDDNVKKVDDDLSIKEKDILHH.

This sequence belongs to the RRF family.

The protein resides in the cytoplasm. Responsible for the release of ribosomes from messenger RNA at the termination of protein biosynthesis. May increase the efficiency of translation by recycling ribosomes from one round of translation to another. The chain is Ribosome-recycling factor from Wolbachia pipientis subsp. Culex pipiens (strain wPip).